A 247-amino-acid chain; its full sequence is MENFLLEKIINKKLSSDQYSDVVPNGLQIEGEKIIKKIITGVTACQELLDKALSYGANAIIVHHGYFWKNESQCIHNMTRKRLTTILSNNINLYSWHIPLDIHPKLGNNAQIAKKLNIRIKGYILPYLFWGTLEENINAFDFSKKIEKKYEKKPIHIYANAPIYISRIAWCSGRGQNFIKQAYNFGIDAFLTGEISEETMHIAKELGIHFFSIGHHATEKDGIKSLGKWLNNKYDLDVTFIDIHNPA.

A divalent metal cation contacts are provided by histidine 63, histidine 64, aspartate 101, histidine 215, and glutamate 219.

The protein belongs to the GTP cyclohydrolase I type 2/NIF3 family. Homohexamer.

The sequence is that of GTP cyclohydrolase 1 type 2 homolog from Buchnera aphidicola subsp. Schizaphis graminum (strain Sg).